A 355-amino-acid polypeptide reads, in one-letter code: Phospho-N-acetylmuramoyl-pentapeptide-transferase (355 aa).

The next 10 membrane-spanning stretches (helical) occupy residues Gly-3–Ile-23, Val-56–Phe-76, Gly-80–Ile-100, Ala-120–Leu-140, Val-156–Val-176, Leu-185–Phe-205, Pro-224–Trp-244, Ile-251–Val-271, Leu-276–Val-296, and Phe-330–Leu-350.

The protein belongs to the glycosyltransferase 4 family. MraY subfamily. The cofactor is Mg(2+).

The protein localises to the cell membrane. It carries out the reaction UDP-N-acetyl-alpha-D-muramoyl-L-alanyl-gamma-D-glutamyl-meso-2,6-diaminopimeloyl-D-alanyl-D-alanine + di-trans,octa-cis-undecaprenyl phosphate = di-trans,octa-cis-undecaprenyl diphospho-N-acetyl-alpha-D-muramoyl-L-alanyl-D-glutamyl-meso-2,6-diaminopimeloyl-D-alanyl-D-alanine + UMP. It functions in the pathway cell wall biogenesis; peptidoglycan biosynthesis. Catalyzes the initial step of the lipid cycle reactions in the biosynthesis of the cell wall peptidoglycan: transfers peptidoglycan precursor phospho-MurNAc-pentapeptide from UDP-MurNAc-pentapeptide onto the lipid carrier undecaprenyl phosphate, yielding undecaprenyl-pyrophosphoryl-MurNAc-pentapeptide, known as lipid I. This is Phospho-N-acetylmuramoyl-pentapeptide-transferase from Frankia casuarinae (strain DSM 45818 / CECT 9043 / HFP020203 / CcI3).